Consider the following 450-residue polypeptide: Keratin, type I cytoskeletal 25 (450 aa).

Low complexity predominate over residues 1–23 (MSLRLSSASRRSCPRPTTGSLRL). The interval 1–26 (MSLRLSSASRRSCPRPTTGSLRLSGG) is disordered. The interval 1-78 (MSLRLSSASR…VNERGLLSGN (78 aa)) is head. Residues 79 to 114 (EKVTMQNLNDRLASYLDSVHALEEANADLEQKIKGW) form a coil 1A region. One can recognise an IF rod domain in the interval 79-394 (EKVTMQNLND…LLIGGDDGAC (316 aa)). The tract at residues 115-136 (YEKFGPGSCRGLDHDYSRYFPI) is linker 1. Residues 137-228 (IDDLKNQIIA…KNHKEEMQVL (92 aa)) form a coil 1B region. A linker 12 region spans residues 229-251 (QCAAGGNVNVEMNAAPGVDLTVL). Residues 252 to 390 (LNNMRAEYEA…ETYCLLIGGD (139 aa)) form a coil 2 region. A tail region spans residues 391–450 (DGACKSGGYKSKDYGSGNVGSQVKDSAKAIVVKKVLEEVDQRSKILTTRLRSLEEKSQSN). Residue serine 442 is modified to Phosphoserine.

It belongs to the intermediate filament family. Heterodimer of a type I and a type II keratin. Heterodimer with type II keratin KRT5 leading to the formation of keratin intermediate filament (KIF) network. Interacts with KRT6A to form filaments.

The protein resides in the cytoplasm. In terms of biological role, essential for the proper assembly of type I and type II keratin protein complexes and formation of keratin intermediate filaments in the inner root sheath (irs). Plays a role in the cytoskeleton organization. The polypeptide is Keratin, type I cytoskeletal 25 (KRT25) (Pan troglodytes (Chimpanzee)).